Consider the following 468-residue polypeptide: Protein maelstrom 2 (468 aa).

Residues 2–69 constitute a DNA-binding region (HMG box); sequence PPKKHSGFMM…LTRVKKERLN (68 aa). The disordered stretch occupies residues 374–393; the sequence is KEDSPTVLSPASSRRSLASS. Over residues 381–393 the composition is skewed to low complexity; sequence LSPASSRRSLASS.

The protein belongs to the maelstrom family.

The protein resides in the cytoplasm. The protein localises to the nucleus. In terms of biological role, involved both in the piRNA and miRNA metabolic processes. As a component of the meiotic nuage, plays a central role during oogenesis by repressing transposable elements and preventing their mobilization, which is essential for the germline integrity. Repression of transposable elements is mediated via the piRNA metabolic process, which mediates the repression of transposable elements during meiosis by forming complexes composed of piRNAs and Piwi proteins and governs the repression of transposons. As a nuclear component, it is required for proper differentiation in the germline stem cell (GSC) lineage by repressing microRNA-7 (miR-7), thereby acting as an indirect regulator of bag-of-marbles (Bam). Acts by binding to the promoter of miR-7 gene and repressing its expression; miR-7 repression alleviates the Bam repression by miR-7, thereby allowing differentiation in the germline stem cell (GSC) lineage. This Drosophila ananassae (Fruit fly) protein is Protein maelstrom 2 (mael2).